A 238-amino-acid chain; its full sequence is Ribose-5-phosphate isomerase A (238 aa).

Residues 30–33 (SGST), 87–90 (DGAD), and 100–103 (KGGG) each bind substrate. The active-site Proton acceptor is E109. K127 provides a ligand contact to substrate.

This sequence belongs to the ribose 5-phosphate isomerase family. In terms of assembly, homodimer.

It catalyses the reaction aldehydo-D-ribose 5-phosphate = D-ribulose 5-phosphate. The protein operates within carbohydrate degradation; pentose phosphate pathway; D-ribose 5-phosphate from D-ribulose 5-phosphate (non-oxidative stage): step 1/1. In terms of biological role, catalyzes the reversible conversion of ribose-5-phosphate to ribulose 5-phosphate. This is Ribose-5-phosphate isomerase A from Prochlorococcus marinus (strain MIT 9303).